Here is a 326-residue protein sequence, read N- to C-terminus: BTB/POZ domain-containing protein At1g21780 (326 aa).

A BTB domain is found at 161 to 228 (TDVIIHTADG…LYGNITQEEF (68 aa)).

As to quaternary structure, homodimer. Interacts with CUL3A and CUL3B.

Its pathway is protein modification; protein ubiquitination. May act as a substrate-specific adapter of an E3 ubiquitin-protein ligase complex (CUL3-RBX1-BTB) which mediates the ubiquitination and subsequent proteasomal degradation of target proteins. The polypeptide is BTB/POZ domain-containing protein At1g21780 (Arabidopsis thaliana (Mouse-ear cress)).